The sequence spans 188 residues: Large ribosomal subunit protein eL18 (188 aa).

Lysine 119 participates in a covalent cross-link: Glycyl lysine isopeptide (Lys-Gly) (interchain with G-Cter in SUMO2). Serine 130 carries the post-translational modification Phosphoserine. A disordered region spans residues arginine 150–asparagine 188. Basic residues-rich tracts occupy residues histidine 151–glycine 171 and glycine 179–asparagine 188. Threonine 158 carries the phosphothreonine modification. Lysine 164 is covalently cross-linked (Glycyl lysine isopeptide (Lys-Gly) (interchain with G-Cter in SUMO2)).

It belongs to the eukaryotic ribosomal protein eL18 family. As to quaternary structure, component of the large ribosomal subunit.

The protein resides in the cytoplasm. It is found in the cytosol. It localises to the rough endoplasmic reticulum. Its function is as follows. Component of the large ribosomal subunit. The ribosome is a large ribonucleoprotein complex responsible for the synthesis of proteins in the cell. The protein is Large ribosomal subunit protein eL18 (RPL18) of Oryctolagus cuniculus (Rabbit).